Reading from the N-terminus, the 177-residue chain is uncharacterized protein (177 aa).

It is found in the plastid. The protein resides in the chloroplast. This is an uncharacterized protein from Chlorella vulgaris (Green alga).